The chain runs to 190 residues: RING finger protein 227 (190 aa).

The RING-type zinc-finger motif lies at 18–81 (CNICFRPYNL…RRAVTCPFCR (64 aa)). Residues 108–147 (ARAEREGDPMGSPAKDSGEDGEDDDGEAESEKGAGPPSAG) form a disordered region. Residues 126–135 (EDGEDDDGEA) are compositionally biased toward acidic residues.

The chain is RING finger protein 227 from Mus musculus (Mouse).